We begin with the raw amino-acid sequence, 564 residues long: Probable lysosomal cobalamin transporter (564 aa).

9 helical membrane passes run 8-28, 41-61, 94-114, 144-164, 188-208, 312-332, 375-395, 418-438, and 506-526; these read LIWS…STFI, VTLI…LLPV, TIVY…GIPF, YTLF…FIPT, ALTF…IIYT, LLAG…LCVT, VIFT…IAAF, LLLT…VAVI, and FFGA…LLVL.

This sequence belongs to the LIMR family. LMBRD1 subfamily.

The protein localises to the lysosome membrane. Functionally, probable lysosomal cobalamin transporter. Required to export cobalamin from lysosomes allowing its conversion to cofactors. The polypeptide is Probable lysosomal cobalamin transporter (Aspergillus clavatus (strain ATCC 1007 / CBS 513.65 / DSM 816 / NCTC 3887 / NRRL 1 / QM 1276 / 107)).